The following is a 349-amino-acid chain: Tetraacyldisaccharide 4'-kinase (349 aa).

58-65 (TAGGSGKT) lines the ATP pocket.

Belongs to the LpxK family.

The catalysed reaction is a lipid A disaccharide + ATP = a lipid IVA + ADP + H(+). It functions in the pathway glycolipid biosynthesis; lipid IV(A) biosynthesis; lipid IV(A) from (3R)-3-hydroxytetradecanoyl-[acyl-carrier-protein] and UDP-N-acetyl-alpha-D-glucosamine: step 6/6. Transfers the gamma-phosphate of ATP to the 4'-position of a tetraacyldisaccharide 1-phosphate intermediate (termed DS-1-P) to form tetraacyldisaccharide 1,4'-bis-phosphate (lipid IVA). This chain is Tetraacyldisaccharide 4'-kinase, found in Shewanella amazonensis (strain ATCC BAA-1098 / SB2B).